We begin with the raw amino-acid sequence, 380 residues long: Cytochrome b (380 aa).

4 helical membrane-spanning segments follow: residues 34–54 (FGSLLALCLMTQILTGLLLAM), 78–99 (WLIRNMHANGASFFFICIYMHI), 114–134 (WNTGVLLLLTLMATAFVGYVL), and 179–199 (FFALHFLLPFMIAGLTLIHLT). 2 residues coordinate heme b: H84 and H98. Residues H183 and H197 each contribute to the heme b site. Position 202 (H202) interacts with a ubiquinone. 4 helical membrane-spanning segments follow: residues 227–247 (LKDILGLALLLLPLTTMALFS), 289–309 (LGGVLALAASVLVLFLSPLLH), 321–341 (LSQLLFWTLVANLFILTWIGS), and 348–368 (FIIIGQLASTTYFTILLILFP).

It belongs to the cytochrome b family. The cytochrome bc1 complex contains 11 subunits: 3 respiratory subunits (MT-CYB, CYC1 and UQCRFS1), 2 core proteins (UQCRC1 and UQCRC2) and 6 low-molecular weight proteins (UQCRH/QCR6, UQCRB/QCR7, UQCRQ/QCR8, UQCR10/QCR9, UQCR11/QCR10 and a cleavage product of UQCRFS1). This cytochrome bc1 complex then forms a dimer. Heme b serves as cofactor.

The protein resides in the mitochondrion inner membrane. In terms of biological role, component of the ubiquinol-cytochrome c reductase complex (complex III or cytochrome b-c1 complex) that is part of the mitochondrial respiratory chain. The b-c1 complex mediates electron transfer from ubiquinol to cytochrome c. Contributes to the generation of a proton gradient across the mitochondrial membrane that is then used for ATP synthesis. This Oceanodroma furcata (Fork-tailed storm-petrel) protein is Cytochrome b (MT-CYB).